The primary structure comprises 137 residues: Ribosome-binding factor A (137 aa).

This sequence belongs to the RbfA family. In terms of assembly, monomer. Binds 30S ribosomal subunits, but not 50S ribosomal subunits or 70S ribosomes.

It localises to the cytoplasm. Functionally, one of several proteins that assist in the late maturation steps of the functional core of the 30S ribosomal subunit. Associates with free 30S ribosomal subunits (but not with 30S subunits that are part of 70S ribosomes or polysomes). Required for efficient processing of 16S rRNA. May interact with the 5'-terminal helix region of 16S rRNA. The polypeptide is Ribosome-binding factor A (Nitrobacter hamburgensis (strain DSM 10229 / NCIMB 13809 / X14)).